The following is a 285-amino-acid chain: Polyamine aminopropyltransferase (285 aa).

The PABS domain occupies 2-237 (EFWFSELHSP…GYWLFGFASK (236 aa)). Q31 provides a ligand contact to S-methyl-5'-thioadenosine. D86 provides a ligand contact to spermidine. S-methyl-5'-thioadenosine-binding positions include E106 and 137 to 138 (DA). Catalysis depends on D155, which acts as the Proton acceptor.

Belongs to the spermidine/spermine synthase family. In terms of assembly, homodimer or homotetramer.

It localises to the cytoplasm. The enzyme catalyses S-adenosyl 3-(methylsulfanyl)propylamine + putrescine = S-methyl-5'-thioadenosine + spermidine + H(+). Its pathway is amine and polyamine biosynthesis; spermidine biosynthesis; spermidine from putrescine: step 1/1. In terms of biological role, catalyzes the irreversible transfer of a propylamine group from the amino donor S-adenosylmethioninamine (decarboxy-AdoMet) to putrescine (1,4-diaminobutane) to yield spermidine. The protein is Polyamine aminopropyltransferase of Lachnospira eligens (strain ATCC 27750 / DSM 3376 / VPI C15-48 / C15-B4) (Eubacterium eligens).